A 130-amino-acid chain; its full sequence is Small ribosomal subunit protein uS9 (130 aa).

The segment at Lys-111–Arg-130 is disordered.

It belongs to the universal ribosomal protein uS9 family.

This is Small ribosomal subunit protein uS9 from Thermoanaerobacter sp. (strain X514).